A 238-amino-acid polypeptide reads, in one-letter code: Ribonuclease M (238 aa).

5 cysteine pairs are disulfide-bonded: Cys-5-Cys-22, Cys-13-Cys-58, Cys-21-Cys-126, Cys-66-Cys-118, and Cys-191-Cys-225. Residue His-51 is part of the active site. Asn-74 carries N-linked (GlcNAc...) asparagine glycosylation. Active-site residues include Glu-111 and His-115.

This sequence belongs to the RNase T2 family.

The catalysed reaction is a ribonucleotidyl-ribonucleotide-RNA + H2O = a 3'-end 3'-phospho-ribonucleotide-RNA + a 5'-end dephospho-ribonucleoside-RNA + H(+). This is a base non-specific and adenylic acid preferential ribonuclease. This chain is Ribonuclease M, found in Aspergillus phoenicis (Aspergillus saitoi).